We begin with the raw amino-acid sequence, 1041 residues long: Cullin-associated NEDD8-dissociated protein 1, C-terminal part (1041 aa).

2 disordered regions span residues 1-24 (MSSDAMSDYSHDDEHDPQTDELRE) and 64-103 (DMGEDEEMSGTQDDGSEDDVTEEPDLEDDDFEDFEEEGGY). The segment covering 9–24 (YSHDDEHDPQTDELRE) has biased composition (basic and acidic residues). Residues 65–103 (MGEDEEMSGTQDDGSEDDVTEEPDLEDDDFEDFEEEGGY) are compositionally biased toward acidic residues. The HEAT 1 repeat unit spans residues 138–176 (SLYQQIAPAIVARFNKEREESVKLELVSTMDALVRKTAE). Residues 189 to 237 (SVGSGSKISRKRRRQDSDASMIDFEPSMGTSSAAGTPLAAPSSPQSGPQ) are disordered. Residues 225-237 (PLAAPSSPQSGPQ) are compositionally biased toward low complexity. HEAT repeat units lie at residues 242-279 (NALPVIVRSLVTMWKQASIHLKQAIIILLKSLALVRYG), 339-376 (PFLIALIPGVIVAVNDKNYKVSSEALAAVEQIVKALTP), 434-472 (LSFEKRSKGLVTLVDRLKNETTRLSAVRAIDDVAVLCSR), 479-516 (NWVREVTAELGAQLRKSDRVLRSASLETLRSLSMNPNT), 525-560 (MKNLEECLIPLISVEDVHLLAPSLIIIAKLVPGNAQ), 598-637 (GSGLTLMQNLLQDVGVNGDTSVVGRSIGTLLVHGGSNVGV), 670-708 (GASCSLTPNVFIPHFNSKSEKVRLASATALGNAAAGNVK), 710-744 (YLPTILGGLEKSDPQSYLLLHSVKELLQHPEMVRR), 780-817 (LDPPAYIPQFQEYLANGDAGIRSIVVSAFRFTLSDSRD), and 822-867 (VLRP…HLGE).

The protein belongs to the CAND family. Interacts with candA-N. Interacts with unneddylated cullins culA and culD.

It localises to the nucleus. Its function is as follows. Assembly factor of SCF (SKP1-CUL1-F-box protein) E3 ubiquitin ligase complexes that promotes the exchange of the substrate-recognition F-box subunit in SCF complexes, thereby playing a key role in the cellular repertoire of SCF complexes. Acts as a F-box protein exchange factor when interacting with candA-N. The protein is Cullin-associated NEDD8-dissociated protein 1, C-terminal part (candA-C) of Emericella nidulans (strain FGSC A4 / ATCC 38163 / CBS 112.46 / NRRL 194 / M139) (Aspergillus nidulans).